A 580-amino-acid chain; its full sequence is Probable inositol transporter 3 (580 aa).

12 helical membrane-spanning segments follow: residues 34 to 54, 69 to 89, 104 to 124, 127 to 147, 161 to 181, 187 to 207, 289 to 309, 316 to 336, 344 to 364, 455 to 475, 493 to 513, and 524 to 544; these read GIGG…LLYI, EIIV…GGWY, VLFL…VIIL, LLVG…ISEM, GLLI…FVHT, WMLG…LTLP, FVGI…AGYA, ALAL…MMFV, LMII…AVFN, FGYL…PGMG, LAGG…SETF, and GTFL…WLLV.

Belongs to the major facilitator superfamily. Sugar transporter (TC 2.A.1.1) family.

The protein localises to the membrane. In terms of biological role, plasma membrane inositol-proton symporter. This is Probable inositol transporter 3 (INT3) from Arabidopsis thaliana (Mouse-ear cress).